Here is a 107-residue protein sequence, read N- to C-terminus: Universal stress protein B homolog (107 aa).

2 helical membrane-spanning segments follow: residues 6–25 and 89–106; these read TILF…YVTA and LFIL…VAFM.

Belongs to the universal stress protein B family.

The protein resides in the cell inner membrane. The sequence is that of Universal stress protein B homolog from Vibrio cholerae serotype O1 (strain ATCC 39541 / Classical Ogawa 395 / O395).